The chain runs to 446 residues: Fatty acid desaturase 2 (446 aa).

The Cytoplasmic segment spans residues 1-132 (MGMGGQSGEG…EDMRLFKSNP (132 aa)). In terms of domain architecture, Cytochrome b5 heme-binding spans 20-97 (EAQYSWEEIQ…LKPLYIGELA (78 aa)). Residues 133-153 (AFFIFYLFHILLIEFLAWCTL) form a helical membrane-spanning segment. Histidine 154 is a topological domain (lumenal). The chain crosses the membrane as a helical span at residues 155–175 (YLGTGWIPAIITVLLLTISQA). Topologically, residues 176 to 265 (QAGWLQHDFG…IKYLPYNHQH (90 aa)) are cytoplasmic. The short motif at 182-186 (HDFGH) is the Histidine box-1 element. Positions 219-223 (HFQHH) match the Histidine box-2 motif. Residues 266 to 286 (LYFFLIGPPLLIPVYFTVQII) traverse the membrane as a helical segment. Topologically, residues 287-307 (KTMIARKDWVDLAWSVSYYVR) are lumenal. The helical transmembrane segment at 308–328 (FFFTFVPFFGVLGSLALLNAV) threads the bilayer. Residues 329–446 (RFFESHWFVW…QLWLDAYLHK (118 aa)) are Cytoplasmic-facing. Positions 384–388 (QIEHH) match the Histidine box-3 motif.

It belongs to the fatty acid desaturase type 1 family.

It is found in the endoplasmic reticulum membrane. It participates in lipid metabolism; polyunsaturated fatty acid biosynthesis. Component of a lipid metabolic pathway that catalyzes biosynthesis of highly unsaturated fatty acids (HUFA) from precursor essential polyunsaturated fatty acids (PUFA) linoleic acid (LA) (18:2n-6) and alpha-linolenic acid (ALA) (18:3n-3). Catalyzes the first and rate limiting step in this pathway which is the desaturation of LA (18:2n-6) and ALA (18:3n-3) into gamma-linoleic acid (GLA) (18:3n-6) and stearidonic acid (18:4n-3) respectively and other desaturation steps. Highly unsaturated fatty acids (HUFA) play pivotal roles in many biological functions. In Xenopus laevis (African clawed frog), this protein is Fatty acid desaturase 2 (fads2).